Here is a 157-residue protein sequence, read N- to C-terminus: Glutathione peroxidase (157 aa).

Residue Cys-35 is part of the active site.

It belongs to the glutathione peroxidase family.

It catalyses the reaction 2 glutathione + H2O2 = glutathione disulfide + 2 H2O. In Lactococcus lactis subsp. cremoris (strain MG1363), this protein is Glutathione peroxidase (gpo).